The sequence spans 477 residues: Tripartite motif-containing protein 72 (477 aa).

Cys14, Cys17, Cys29, His31, Cys34, Cys37, Cys53, Cys56, Cys86, His89, Cys97, Asp100, Cys105, Cys108, His114, and His117 together coordinate Zn(2+). Residues 14 to 57 (CPLCLQLFDAPVTAECGHSFCRACLSRVAGEPAADGTVNCPCCQ) form an RING-type zinc finger. The B box-type zinc-finger motif lies at 81 to 122 (VPQGHCEEHLDPLSIYCEQDRVLVCGVCASLGSHRGHRLLPA). Residues 135–232 (QQKLQLQEAS…EKVLEEVADK (98 aa)) adopt a coiled-coil conformation. A Phosphoserine modification is found at Ser255. Positions 271–475 (DFKFQVWRKM…PLLLVGPDGQ (205 aa)) constitute a B30.2/SPRY domain.

Belongs to the TRIM/RBCC family. Homodimer. Homooligomer; disulfide-linked. Oligomerizes on the phospholipid membrane. Interacts with DYSF and CAV3. In terms of processing, disulfide bond formation at Cys-242 occurs in case of membrane damage that cause the entry of the oxidized milieu of the extracellular space, resulting in homooligomerization. In terms of tissue distribution, muscle-specific.

It localises to the cell membrane. Its subcellular location is the sarcolemma. The protein localises to the cytoplasmic vesicle membrane. It catalyses the reaction S-ubiquitinyl-[E2 ubiquitin-conjugating enzyme]-L-cysteine + [acceptor protein]-L-lysine = [E2 ubiquitin-conjugating enzyme]-L-cysteine + N(6)-ubiquitinyl-[acceptor protein]-L-lysine.. It participates in protein modification; protein ubiquitination. Specifically binds phosphatidylserine. The binding to phospholipids enhances ubiquitination activity. Functionally, muscle-specific E3 ubiquitin-protein ligase that plays a central role in cell membrane repair by nucleating the assembly of the repair machinery at injury sites. Its ubiquitination activity is mediated by E2 ubiquitin-conjugating enzymes UBE2D1, UBE2D2 and UBE2D3. Acts as a sensor of oxidation: upon membrane damage, entry of extracellular oxidative environment results in disulfide bond formation and homooligomerization at the injury site. This oligomerization acts as a nucleation site for recruitment of TRIM72-containing vesicles to the injury site, leading to membrane patch formation. Probably acts upstream of the Ca(2+)-dependent membrane resealing process. Required for transport of DYSF to sites of cell injury during repair patch formation. Regulates membrane budding and exocytosis. May be involved in the regulation of the mobility of KCNB1-containing endocytic vesicles. The sequence is that of Tripartite motif-containing protein 72 from Oryctolagus cuniculus (Rabbit).